The primary structure comprises 340 residues: MLSMQASFFFPTGPFILFVFTASTIFHLQQRMVKIQPTWELQMVTQVTTESPSSPQLKGMWTINAIGRLGNQMGEYATLYALARMNGRPAFIPPEMHSTLAPIFRITLPVLHASTARRIPWQNYHLNDWMEERYRHIPGEYVRLTGYPCSWTFYHHLRTEILREFTLHNHVREEAQDFLRGLRVNGSRPSTYVGVHVRRGDYVHVMPNVWKGVVADRRYLEQALDWFRARYRSPVFVVSSNGMAWCRENINASRGDVVFAGNGIEGSPAKDFALLTQCNHTVMTIGTFGIWAAYLAGGETIYLANYTLPDSPFLKLFKPEAAFLPEWIGIEADLSPLLKH.

Residues 1–7 (MLSMQAS) lie on the Cytoplasmic side of the membrane. Residues 8 to 28 (FFFPTGPFILFVFTASTIFHL) traverse the membrane as a helical; Signal-anchor for type II membrane protein segment. Residues 29-340 (QQRMVKIQPT…EADLSPLLKH (312 aa)) lie on the Lumenal side of the membrane. 4 N-linked (GlcNAc...) asparagine glycosylation sites follow: asparagine 185, asparagine 251, asparagine 279, and asparagine 305.

The protein localises to the golgi apparatus. It is found in the golgi stack membrane. It carries out the reaction a beta-D-galactosyl-(1-&gt;3)-N-acetyl-beta-D-glucosaminyl derivative + GDP-beta-L-fucose = an alpha-L-Fuc-(1-&gt;2)-beta-D-Gal-(1-&gt;3)-beta-D-GlcNAc derivative + GDP + H(+). The enzyme catalyses a beta-D-galactosyl-(1-&gt;4)-N-acetyl-beta-D-glucosaminyl derivative + GDP-beta-L-fucose = an alpha-L-Fuc-(1-&gt;2)-beta-D-Gal-(1-&gt;4)-beta-D-GlcNAc derivative + GDP + H(+). The catalysed reaction is a neolactoside nLc4Cer + GDP-beta-L-fucose = a neolactoside IV(2)-alpha-Fuc-nLc4Cer + GDP + H(+). It catalyses the reaction a neolactoside nLc4Cer(d18:1(4E)) + GDP-beta-L-fucose = a neolactoside IV(2)-alpha-Fuc-nLc4Cer(d18:1(4E)) + GDP + H(+). It carries out the reaction a ganglioside GM1 + GDP-beta-L-fucose = a ganglioside Fuc-GM1 + GDP + H(+). The enzyme catalyses a ganglioside GA1 + GDP-beta-L-fucose = a ganglioside Fuc-GA1 + GDP + H(+). The catalysed reaction is Lc4Cer + GDP-beta-L-fucose = alpha-L-fucosyl-(1-&gt;2)-beta-D-galactosyl-(1-&gt;3)-N-acetyl-beta-D-glucosaminyl-(1-&gt;3)-beta-D-galactosyl-(1-&gt;4)-beta-D-glucosyl-(1&lt;-&gt;1')-ceramide + GDP + H(+). It catalyses the reaction a beta-D-Gal-(1-&gt;3)-beta-D-GlcNAc-(1-&gt;3)-beta-D-Gal-(1-&gt;4)-beta-D-Glc-(1&lt;-&gt;1')-Cer(d18:1(4E)) + GDP-beta-L-fucose = alpha-L-fucosyl-(1-&gt;2)- beta-D-galactosyl-(1-&gt;3)-N-acetyl-beta-D-glucosaminyl-(1-&gt;3)-beta-D-galactosyl-(1-&gt;4)-beta-D-glucosyl-(1&lt;-&gt;1')-N-acylsphing-4-enine + GDP + H(+). It carries out the reaction a ganglioside GD1b + GDP-beta-L-fucose = a ganglioside Fuc-GD1b + GDP + H(+). The enzyme catalyses a ganglioside GM1 (d18:1(4E)) + GDP-beta-L-fucose = a ganglioside Fuc-GM1 (d18:1(4E)) + GDP + H(+). The catalysed reaction is a globoside GalGb4Cer (d18:1(4E)) + GDP-beta-L-fucose = a globoside Globo-H (d18:1(4E)) + GDP + H(+). It catalyses the reaction a lactoside III(4)-a-Fuc-Lc4Cer + GDP-beta-L-fucose = a lactoside IV(2),III(4)-a-[Fuc]2-Lc4Cer + GDP + H(+). It carries out the reaction beta-D-galactosyl-(1-&gt;3)-N-acetyl-D-galactosamine + GDP-beta-L-fucose = alpha-L-fucosyl-(1-&gt;2)-beta-D-galactosyl-(1-&gt;3)-N-acetyl-D-galactosamine + GDP + H(+). The protein operates within protein modification; protein glycosylation. Catalyzes the transfer of L-fucose, from a guanosine diphosphate-beta-L-fucose, to the terminal galactose on both O- and N-linked glycans chains of cell surface glycoproteins and glycolipids and the resulting epitope regulates several processes such as cell-cell interaction including host-microbe interaction, cell surface expression and cell proliferation. Preferentially fucosylates gangliosides GA1 and GM1 in the antrum, cecum and colon and in the female reproductive organs. Fucosylated host glycoproteins or glycolipids mediate interaction with intestinal microbiota influencing its composition. Creates a soluble precursor oligosaccharide FuC-alpha ((1,2)Galbeta-) called the H antigen which is an essential substrate for the final step in the soluble ABO blood group antigen synthesis pathway. The protein is Galactoside alpha-(1,2)-fucosyltransferase 2 of Sus scrofa (Pig).